We begin with the raw amino-acid sequence, 190 residues long: FMN reductase (NADH) RutF (190 aa).

The protein belongs to the non-flavoprotein flavin reductase family. RutF subfamily.

The enzyme catalyses FMNH2 + NAD(+) = FMN + NADH + 2 H(+). Catalyzes the reduction of FMN to FMNH2 which is used to reduce pyrimidine by RutA via the Rut pathway. The protein is FMN reductase (NADH) RutF of Pantoea ananatis (strain LMG 20103).